The primary structure comprises 299 residues: Oxygen-dependent coproporphyrinogen-III oxidase (299 aa).

Ser-92 provides a ligand contact to substrate. A divalent metal cation contacts are provided by His-96 and His-106. Catalysis depends on His-106, which acts as the Proton donor. Residue 108-110 (NVR) coordinates substrate. A divalent metal cation is bound by residues His-145 and His-175. An important for dimerization region spans residues 240–275 (YVEFNLVWDRGTLFGLQTGGRTESILMSMPPLVRWE). 258–260 (GGR) provides a ligand contact to substrate.

The protein belongs to the aerobic coproporphyrinogen-III oxidase family. As to quaternary structure, homodimer. It depends on a divalent metal cation as a cofactor.

It localises to the cytoplasm. The catalysed reaction is coproporphyrinogen III + O2 + 2 H(+) = protoporphyrinogen IX + 2 CO2 + 2 H2O. It participates in porphyrin-containing compound metabolism; protoporphyrin-IX biosynthesis; protoporphyrinogen-IX from coproporphyrinogen-III (O2 route): step 1/1. In terms of biological role, involved in the heme biosynthesis. Catalyzes the aerobic oxidative decarboxylation of propionate groups of rings A and B of coproporphyrinogen-III to yield the vinyl groups in protoporphyrinogen-IX. In Salmonella schwarzengrund (strain CVM19633), this protein is Oxygen-dependent coproporphyrinogen-III oxidase.